Here is a 261-residue protein sequence, read N- to C-terminus: Gap junction beta-6 protein (261 aa).

Residues 1–22 (MDWGTLHTVIGGVNKHSTSIGK) lie on the Cytoplasmic side of the membrane. The helical transmembrane segment at 23–45 (VWITVIFIFRVMILVVAAQEVWG) threads the bilayer. Topologically, residues 46–75 (DEQEDFVCNTLQPGCKNVCYDHFFPVSHIR) are extracellular. The chain crosses the membrane as a helical span at residues 76-98 (LWALQLIFVSTPALLVAMHVAYY). At 99–131 (RHETARKFIRGEKRNEFKDLEDIKRQKVRIEGS) the chain is on the cytoplasmic side. A helical transmembrane segment spans residues 132–154 (LWWTYTSSIFFRIIFEAAFMYVF). The Extracellular portion of the chain corresponds to 155–192 (YFLYNGYHLPWVLKCGIDPCPNLVDCFISRPTEKTVFT). The chain crosses the membrane as a helical span at residues 193-215 (VFMISASVICMLLNVAELCYLLL). At 216–261 (KLCFRRSKRTQAQRNHPNHALKESKQNEMNELISDSGQNAITSFPS) the chain is on the cytoplasmic side.

The protein belongs to the connexin family. Beta-type (group I) subfamily. As to quaternary structure, a connexon is composed of a hexamer of connexins. Interacts with CNST. Highly expressed in adult brain and skin. Less in uterus, lung and eye. Very low in testis and sciatic nerve. No expression before birth.

The protein localises to the cell membrane. Its subcellular location is the cell junction. The protein resides in the gap junction. Its function is as follows. One gap junction consists of a cluster of closely packed pairs of transmembrane channels, the connexons, through which materials of low MW diffuse from one cell to a neighboring cell. The protein is Gap junction beta-6 protein (Gjb6) of Mus musculus (Mouse).